The primary structure comprises 294 residues: Ribosomal RNA small subunit methyltransferase A (294 aa).

S-adenosyl-L-methionine-binding residues include Asn-33, Leu-35, Gly-60, Glu-81, Asp-106, and Asn-131.

Belongs to the class I-like SAM-binding methyltransferase superfamily. rRNA adenine N(6)-methyltransferase family. RsmA subfamily.

Its subcellular location is the cytoplasm. The enzyme catalyses adenosine(1518)/adenosine(1519) in 16S rRNA + 4 S-adenosyl-L-methionine = N(6)-dimethyladenosine(1518)/N(6)-dimethyladenosine(1519) in 16S rRNA + 4 S-adenosyl-L-homocysteine + 4 H(+). Functionally, specifically dimethylates two adjacent adenosines (A1518 and A1519) in the loop of a conserved hairpin near the 3'-end of 16S rRNA in the 30S particle. May play a critical role in biogenesis of 30S subunits. This is Ribosomal RNA small subunit methyltransferase A from Lactococcus lactis subsp. lactis (strain IL1403) (Streptococcus lactis).